The following is a 424-amino-acid chain: Histidine--tRNA ligase (424 aa).

This sequence belongs to the class-II aminoacyl-tRNA synthetase family. In terms of assembly, homodimer.

It is found in the cytoplasm. The catalysed reaction is tRNA(His) + L-histidine + ATP = L-histidyl-tRNA(His) + AMP + diphosphate + H(+). The chain is Histidine--tRNA ligase from Salmonella gallinarum (strain 287/91 / NCTC 13346).